A 113-amino-acid chain; its full sequence is N-alpha-acetyltransferase 38, NatC auxiliary subunit (113 aa).

The segment at 1–29 (MAAVLEENGCSRQSSPGAGDSDAEAGDTA) is disordered. Residues 28–106 (TARHKLESLL…IVSIQVELES (79 aa)) form the Sm domain.

The protein belongs to the snRNP Sm proteins family. As to quaternary structure, component of the N-terminal acetyltransferase C (NatC) complex.

The protein localises to the cytoplasm. It localises to the nucleus. Auxillary component of the N-terminal acetyltransferase C (NatC) complex which catalyzes acetylation of N-terminal methionine residues. N-terminal acetylation protects proteins from ubiquitination and degradation by the N-end rule pathway. This Xenopus tropicalis (Western clawed frog) protein is N-alpha-acetyltransferase 38, NatC auxiliary subunit (naa38).